A 286-amino-acid chain; its full sequence is ATP synthase gamma chain (286 aa).

This sequence belongs to the ATPase gamma chain family. F-type ATPases have 2 components, CF(1) - the catalytic core - and CF(0) - the membrane proton channel. CF(1) has five subunits: alpha(3), beta(3), gamma(1), delta(1), epsilon(1). CF(0) has three main subunits: a, b and c.

Its subcellular location is the cell inner membrane. Functionally, produces ATP from ADP in the presence of a proton gradient across the membrane. The gamma chain is believed to be important in regulating ATPase activity and the flow of protons through the CF(0) complex. The sequence is that of ATP synthase gamma chain from Flavobacterium psychrophilum (strain ATCC 49511 / DSM 21280 / CIP 103535 / JIP02/86).